We begin with the raw amino-acid sequence, 502 residues long: ATP synthase subunit alpha (502 aa).

Residues 115-137 (VDGLGPVETTETRPIESPAPGVM) are disordered. 169–176 (GDRQTGKT) is a binding site for ATP.

The protein belongs to the ATPase alpha/beta chains family. In terms of assembly, F-type ATPases have 2 components, CF(1) - the catalytic core - and CF(0) - the membrane proton channel. CF(1) has five subunits: alpha(3), beta(3), gamma(1), delta(1), epsilon(1). CF(0) has three main subunits: a(1), b(2) and c(9-12). The alpha and beta chains form an alternating ring which encloses part of the gamma chain. CF(1) is attached to CF(0) by a central stalk formed by the gamma and epsilon chains, while a peripheral stalk is formed by the delta and b chains.

It localises to the cell membrane. It catalyses the reaction ATP + H2O + 4 H(+)(in) = ADP + phosphate + 5 H(+)(out). Functionally, produces ATP from ADP in the presence of a proton gradient across the membrane. The alpha chain is a regulatory subunit. In Geobacillus kaustophilus (strain HTA426), this protein is ATP synthase subunit alpha.